Consider the following 221-residue polypeptide: Cytidylate kinase (221 aa).

11 to 19 lines the ATP pocket; it reads GPTASGKGT.

Belongs to the cytidylate kinase family. Type 1 subfamily.

Its subcellular location is the cytoplasm. The enzyme catalyses CMP + ATP = CDP + ADP. The catalysed reaction is dCMP + ATP = dCDP + ADP. This chain is Cytidylate kinase, found in Cupriavidus pinatubonensis (strain JMP 134 / LMG 1197) (Cupriavidus necator (strain JMP 134)).